Here is a 271-residue protein sequence, read N- to C-terminus: Acetyl-coenzyme A carboxylase carboxyl transferase subunit beta (271 aa).

A CoA carboxyltransferase N-terminal domain is found at 21 to 271; it reads LWIQCPYCKQ…LGDLLALHTA (251 aa). 4 residues coordinate Zn(2+): cysteine 25, cysteine 28, cysteine 43, and cysteine 46. A C4-type zinc finger spans residues 25–46; it reads CPYCKQGSYRESLGNAQVCPHC.

It belongs to the AccD/PCCB family. Acetyl-CoA carboxylase is a heterohexamer composed of biotin carboxyl carrier protein (AccB), biotin carboxylase (AccC) and two subunits each of ACCase subunit alpha (AccA) and ACCase subunit beta (AccD). The cofactor is Zn(2+).

It localises to the cytoplasm. It catalyses the reaction N(6)-carboxybiotinyl-L-lysyl-[protein] + acetyl-CoA = N(6)-biotinyl-L-lysyl-[protein] + malonyl-CoA. It participates in lipid metabolism; malonyl-CoA biosynthesis; malonyl-CoA from acetyl-CoA: step 1/1. Component of the acetyl coenzyme A carboxylase (ACC) complex. Biotin carboxylase (BC) catalyzes the carboxylation of biotin on its carrier protein (BCCP) and then the CO(2) group is transferred by the transcarboxylase to acetyl-CoA to form malonyl-CoA. The chain is Acetyl-coenzyme A carboxylase carboxyl transferase subunit beta from Lacticaseibacillus paracasei (strain ATCC 334 / BCRC 17002 / CCUG 31169 / CIP 107868 / KCTC 3260 / NRRL B-441) (Lactobacillus paracasei).